Here is a 428-residue protein sequence, read N- to C-terminus: Histidine--tRNA ligase (428 aa).

This sequence belongs to the class-II aminoacyl-tRNA synthetase family.

The protein resides in the cytoplasm. It carries out the reaction tRNA(His) + L-histidine + ATP = L-histidyl-tRNA(His) + AMP + diphosphate + H(+). The polypeptide is Histidine--tRNA ligase (Korarchaeum cryptofilum (strain OPF8)).